A 205-amino-acid chain; its full sequence is Small ribosomal subunit protein uS2 (205 aa).

Belongs to the universal ribosomal protein uS2 family.

In Methanoculleus marisnigri (strain ATCC 35101 / DSM 1498 / JR1), this protein is Small ribosomal subunit protein uS2.